The chain runs to 286 residues: Aquaporin NIP4-1 (286 aa).

The next 2 helical transmembrane spans lie at 59–79 (VMVE…AALM) and 86–106 (LTFP…LSWL). The short motif at 112 to 114 (NPA) is the NPA 1 element. 3 consecutive transmembrane segments (helical) span residues 133 to 153 (LYVA…NAVM), 173 to 193 (LPFL…ATVA), and 201 to 221 (TVGG…IGPV). The NPA 2 signature appears at 227 to 229 (NPA). A helical transmembrane segment spans residues 241-261 (YDGVWIYVVAPVAGMLVGALC).

The protein belongs to the MIP/aquaporin (TC 1.A.8) family. NIP (TC 1.A.8.12) subfamily. Expressed in leaves and at lower levels in roots.

It is found in the membrane. In terms of biological role, aquaporins facilitate the transport of water and small neutral solutes across cell membranes. In Oryza sativa subsp. japonica (Rice), this protein is Aquaporin NIP4-1 (NIP4-1).